The primary structure comprises 402 residues: Major outer membrane porin (402 aa).

An N-terminal signal peptide occupies residues 1 to 22; it reads MKKLLKSALLFAATGSALSLQA.

Belongs to the chlamydial porin (CP) (TC 1.B.2) family. In terms of assembly, part of a disulfide cross-linked outer membrane complex (COMC) composed of the major outer membrane porin (MOMP), the small cysteine-rich protein (OmcA) and the large cysteine-rich periplasmic protein (OmcB).

It localises to the cell outer membrane. In terms of biological role, in elementary bodies (EBs, the infectious stage, which is able to survive outside the host cell) provides the structural integrity of the outer envelope through disulfide cross-links with the small cysteine-rich protein and the large cysteine-rich periplasmic protein. It has been described in publications as the Sarkosyl-insoluble COMC (Chlamydia outer membrane complex), and serves as the functional equivalent of peptidoglycan. It is present but some of the disulfide bonds are reduced in reticulate bodies (RBs). Functionally, permits diffusion of specific solutes through the outer membrane. This is Major outer membrane porin (ompA) from Chlamydophila psittaci (strain ATCC VR-125 / 6BC) (Chlamydia psittaci).